Here is a 137-residue protein sequence, read N- to C-terminus: Large-conductance mechanosensitive channel (137 aa).

The next 2 helical transmembrane spans lie at 10–30 (FAMR…AAFG) and 76–96 (GTFI…FSAV).

This sequence belongs to the MscL family. Homopentamer.

Its subcellular location is the cell inner membrane. Functionally, channel that opens in response to stretch forces in the membrane lipid bilayer. May participate in the regulation of osmotic pressure changes within the cell. The polypeptide is Large-conductance mechanosensitive channel (Yersinia pseudotuberculosis serotype O:1b (strain IP 31758)).